Reading from the N-terminus, the 304-residue chain is uncharacterized protein (304 aa).

72–79 (GPTGSGKT) provides a ligand contact to ATP.

It belongs to the CbbQ/NirQ/NorQ/GpvN family.

This is an uncharacterized protein from Bacillus subtilis (strain 168).